The primary structure comprises 150 residues: Protein SLM6 (150 aa).

Residues 1–76 (MCSRFSSTSL…SLLRSGVFPS (76 aa)) are Extracellular-facing. Residues 77-97 (WLFCMFSSILALAISNSFFFF) traverse the membrane as a helical segment. Over 98–104 (SSNACFS) the chain is Cytoplasmic. A helical transmembrane segment spans residues 105–125 (LLFNSFLVTGFSFSADLLVLA). Topologically, residues 126-150 (AAADTLESNVSNDIGGNCATRLFKL) are extracellular.

It localises to the membrane. This is Protein SLM6 from Saccharomyces cerevisiae (strain ATCC 204508 / S288c) (Baker's yeast).